A 295-amino-acid polypeptide reads, in one-letter code: Ribosomal protein L11 methyltransferase (295 aa).

Residues T145, G166, D188, and N230 each coordinate S-adenosyl-L-methionine.

This sequence belongs to the methyltransferase superfamily. PrmA family.

The protein localises to the cytoplasm. The catalysed reaction is L-lysyl-[protein] + 3 S-adenosyl-L-methionine = N(6),N(6),N(6)-trimethyl-L-lysyl-[protein] + 3 S-adenosyl-L-homocysteine + 3 H(+). Methylates ribosomal protein L11. The chain is Ribosomal protein L11 methyltransferase from Pectobacterium atrosepticum (strain SCRI 1043 / ATCC BAA-672) (Erwinia carotovora subsp. atroseptica).